The primary structure comprises 346 residues: 4-hydroxy-3-methylbut-2-enyl diphosphate reductase (346 aa).

Cys19 serves as a coordination point for [4Fe-4S] cluster. The (2E)-4-hydroxy-3-methylbut-2-enyl diphosphate site is built by His48 and His84. His48 and His84 together coordinate dimethylallyl diphosphate. Isopentenyl diphosphate is bound by residues His48 and His84. Cys106 serves as a coordination point for [4Fe-4S] cluster. His134 lines the (2E)-4-hydroxy-3-methylbut-2-enyl diphosphate pocket. A dimethylallyl diphosphate-binding site is contributed by His134. His134 lines the isopentenyl diphosphate pocket. The Proton donor role is filled by Glu136. (2E)-4-hydroxy-3-methylbut-2-enyl diphosphate is bound at residue Thr175. Position 205 (Cys205) interacts with [4Fe-4S] cluster. Positions 233, 234, 235, and 278 each coordinate (2E)-4-hydroxy-3-methylbut-2-enyl diphosphate. The dimethylallyl diphosphate site is built by Ser233, Ser234, Asn235, and Ser278. Isopentenyl diphosphate contacts are provided by Ser233, Ser234, Asn235, and Ser278.

It belongs to the IspH family. Requires [4Fe-4S] cluster as cofactor.

It carries out the reaction isopentenyl diphosphate + 2 oxidized [2Fe-2S]-[ferredoxin] + H2O = (2E)-4-hydroxy-3-methylbut-2-enyl diphosphate + 2 reduced [2Fe-2S]-[ferredoxin] + 2 H(+). It catalyses the reaction dimethylallyl diphosphate + 2 oxidized [2Fe-2S]-[ferredoxin] + H2O = (2E)-4-hydroxy-3-methylbut-2-enyl diphosphate + 2 reduced [2Fe-2S]-[ferredoxin] + 2 H(+). It participates in isoprenoid biosynthesis; dimethylallyl diphosphate biosynthesis; dimethylallyl diphosphate from (2E)-4-hydroxy-3-methylbutenyl diphosphate: step 1/1. The protein operates within isoprenoid biosynthesis; isopentenyl diphosphate biosynthesis via DXP pathway; isopentenyl diphosphate from 1-deoxy-D-xylulose 5-phosphate: step 6/6. Its function is as follows. Catalyzes the conversion of 1-hydroxy-2-methyl-2-(E)-butenyl 4-diphosphate (HMBPP) into a mixture of isopentenyl diphosphate (IPP) and dimethylallyl diphosphate (DMAPP). Acts in the terminal step of the DOXP/MEP pathway for isoprenoid precursor biosynthesis. The sequence is that of 4-hydroxy-3-methylbut-2-enyl diphosphate reductase from Brucella abortus (strain S19).